The chain runs to 572 residues: Nucleolin 1 (572 aa).

2 disordered regions span residues 1–312 (MGKA…ESAT) and 488–572 (DEAK…FGDE). Over residues 7-21 (KSVAVAVAPAAVPAK) the composition is skewed to low complexity. The span at 27-38 (KREAEDEIEKAV) shows a compositional bias: basic and acidic residues. 2 stretches are compositionally biased toward low complexity: residues 45–58 (AAAA…PAPK) and 72–81 (KAASSSSGSS). Composition is skewed to acidic residues over residues 82–91 (SEEDSSESEE), 109–122 (SSDE…DDED), 144–156 (SESD…DEDE), 177–191 (DSSE…SDED), 208–222 (STDG…EDED), 235–247 (SDEE…ESSD), and 261–276 (ESSE…EEDE). Over residues 300 to 311 (PASNQSQGTESA) the composition is skewed to polar residues. RRM domains lie at 311–387 (ATLF…LAHE) and 411–492 (QSIF…EAKP). Basic and acidic residues-rich tracts occupy residues 488 to 520 (DEAK…DRFG) and 528 to 545 (GGRD…DGGR). The segment covering 553-566 (QSRQSAGTASTGKK) has biased composition (polar residues).

The protein resides in the nucleus. It is found in the nucleolus. In terms of biological role, involved in pre-rRNA processing and ribosome assembly. The sequence is that of Nucleolin 1 from Oryza sativa subsp. japonica (Rice).